The chain runs to 126 residues: Histone H2B type 1-C/E/G (126 aa).

The span at 1–12 (MPEPAKSAPAPK) shows a compositional bias: low complexity. The segment at 1-36 (MPEPAKSAPAPKKGSKKAVTKAQKKDGKKRKRSRKE) is disordered. At Pro2 the chain carries N-acetylproline. An ADP-ribosyl glutamic acid modification is found at Glu3. Residue Lys6 is modified to N6-(2-hydroxyisobutyryl)lysine; alternate. At Lys6 the chain carries N6-(beta-hydroxybutyryl)lysine; alternate. N6-acetyllysine; alternate is present on Lys6. Residue Lys6 is modified to N6-butyryllysine; alternate. The residue at position 6 (Lys6) is an N6-crotonyllysine; alternate. Position 6 is an N6-lactoyllysine; alternate (Lys6). Lys6 is covalently cross-linked (Glycyl lysine isopeptide (Lys-Gly) (interchain with G-Cter in SUMO2); alternate). ADP-ribosylserine is present on Ser7. An N6-(beta-hydroxybutyryl)lysine; alternate modification is found at Lys12. N6-acetyllysine; alternate is present on residues Lys12 and Lys13. Residues Lys12 and Lys13 each carry the N6-crotonyllysine; alternate modification. N6-lactoyllysine; alternate is present on Lys12. An N6-(2-hydroxyisobutyryl)lysine; alternate modification is found at Lys13. Ser15 carries the post-translational modification Phosphoserine; by STK4/MST1. Lys16, Lys17, Lys21, and Lys24 each carry N6-acetyllysine; alternate. 4 positions are modified to N6-crotonyllysine; alternate: Lys16, Lys17, Lys21, and Lys24. N6-lactoyllysine; alternate is present on residues Lys16, Lys17, Lys21, and Lys24. At Lys17 the chain carries N6-glutaryllysine; alternate. Lys21 and Lys24 each carry N6-(2-hydroxyisobutyryl)lysine; alternate. An N6-(beta-hydroxybutyryl)lysine; alternate modification is found at Lys21. N6-butyryllysine; alternate is present on Lys21. Lys21 participates in a covalent cross-link: Glycyl lysine isopeptide (Lys-Gly) (interchain with G-Cter in SUMO2); alternate. At Lys25 the chain carries N6-(2-hydroxyisobutyryl)lysine. Lys35 is modified (N6-(2-hydroxyisobutyryl)lysine; alternate). N6-(beta-hydroxybutyryl)lysine; alternate is present on Lys35. Lys35 carries the post-translational modification N6-crotonyllysine; alternate. Lys35 bears the N6-glutaryllysine; alternate mark. Position 35 is an N6-succinyllysine; alternate (Lys35). Residue Lys35 forms a Glycyl lysine isopeptide (Lys-Gly) (interchain with G-Cter in ubiquitin); alternate linkage. Glu36 is subject to PolyADP-ribosyl glutamic acid. Ser37 is modified (phosphoserine; by AMPK). An N6-(2-hydroxyisobutyryl)lysine; alternate mark is found at Lys44, Lys47, and Lys58. Lys44 bears the N6-lactoyllysine; alternate mark. Residues Lys44 and Lys47 each carry the N6-glutaryllysine; alternate modification. N6-methyllysine; alternate is present on Lys47. At Lys58 the chain carries N6,N6-dimethyllysine; alternate. Residue Arg80 is modified to Dimethylated arginine. Residue Lys86 is modified to N6-(2-hydroxyisobutyryl)lysine; alternate. Lys86 carries the post-translational modification N6-acetyllysine; alternate. Lys86 bears the N6-lactoyllysine; alternate mark. Lys86 carries the N6,N6,N6-trimethyllysine; alternate modification. Omega-N-methylarginine occurs at positions 87 and 93. An N6-(2-hydroxyisobutyryl)lysine; alternate modification is found at Lys109. Lys109 carries the N6-(beta-hydroxybutyryl)lysine; alternate modification. At Lys109 the chain carries N6-lactoyllysine; alternate. At Lys109 the chain carries N6-glutaryllysine; alternate. Residue Lys109 is modified to N6-methyllysine; alternate. The O-linked (GlcNAc) serine glycan is linked to Ser113. Position 116 is a phosphothreonine (Thr116). Residues Lys117 and Lys121 each carry the N6-(2-hydroxyisobutyryl)lysine; alternate modification. Lys117 is modified (N6-(beta-hydroxybutyryl)lysine; alternate). Lys117 and Lys121 each carry N6-lactoyllysine; alternate. 2 positions are modified to N6-glutaryllysine; alternate: Lys117 and Lys121. An N6-succinyllysine; alternate mark is found at Lys117 and Lys121. Lys117 is subject to N6-methylated lysine; alternate. Residue Lys121 forms a Glycyl lysine isopeptide (Lys-Gly) (interchain with G-Cter in ubiquitin); alternate linkage.

This sequence belongs to the histone H2B family. As to quaternary structure, the nucleosome is a histone octamer containing two molecules each of H2A, H2B, H3 and H4 assembled in one H3-H4 heterotetramer and two H2A-H2B heterodimers. The octamer wraps approximately 147 bp of DNA. Interacts with VRK1; the interaction is mediated by the nucleosome acidic patch, a cluster of negatively charged residues of H2A and H2B forming a cleft within the nucleosome core. Post-translationally, monoubiquitination at Lys-35 (H2BK34Ub) by the MSL1/MSL2 dimer is required for histone H3 'Lys-4' (H3K4me) and 'Lys-79' (H3K79me) methylation and transcription activation at specific gene loci, such as HOXA9 and MEIS1 loci. Similarly, monoubiquitination at Lys-121 (H2BK120Ub) by the RNF20/40 complex gives a specific tag for epigenetic transcriptional activation and is also prerequisite for histone H3 'Lys-4' and 'Lys-79' methylation. It also functions cooperatively with the FACT dimer to stimulate elongation by RNA polymerase II. H2BK120Ub also acts as a regulator of mRNA splicing: deubiquitination by USP49 is required for efficient cotranscriptional splicing of a large set of exons. Phosphorylated on Ser-15 (H2BS14ph) by STK4/MST1 during apoptosis; which facilitates apoptotic chromatin condensation. Also phosphorylated on Ser-15 in response to DNA double strand breaks (DSBs), and in correlation with somatic hypermutation and immunoglobulin class-switch recombination. Phosphorylation at Ser-37 (H2BS36ph) by AMPK in response to stress promotes transcription. In terms of processing, glcNAcylation at Ser-113 promotes monoubiquitination of Lys-121. It fluctuates in response to extracellular glucose, and associates with transcribed genes. Post-translationally, ADP-ribosylated by PARP1 or PARP2 on Ser-7 (H2BS6ADPr) in response to DNA damage. H2BS6ADPr promotes recruitment of CHD1L. Mono-ADP-ribosylated on Glu-3 (H2BE2ADPr) by PARP3 in response to single-strand breaks. Poly ADP-ribosylation on Glu-36 (H2BE35ADPr) by PARP1 regulates adipogenesis: it inhibits phosphorylation at Ser-37 (H2BS36ph), thereby blocking expression of pro-adipogenetic genes. Crotonylation (Kcr) is specifically present in male germ cells and marks testis-specific genes in post-meiotic cells, including X-linked genes that escape sex chromosome inactivation in haploid cells. Crotonylation marks active promoters and enhancers and confers resistance to transcriptional repressors. It is also associated with post-meiotically activated genes on autosomes. In terms of processing, hydroxybutyrylation of histones is induced by starvation. Post-translationally, lactylated in macrophages by EP300/P300 by using lactoyl-CoA directly derived from endogenous or exogenous lactate, leading to stimulates gene transcription.

It localises to the nucleus. The protein localises to the chromosome. In terms of biological role, core component of nucleosome. Nucleosomes wrap and compact DNA into chromatin, limiting DNA accessibility to the cellular machineries which require DNA as a template. Histones thereby play a central role in transcription regulation, DNA repair, DNA replication and chromosomal stability. DNA accessibility is regulated via a complex set of post-translational modifications of histones, also called histone code, and nucleosome remodeling. The sequence is that of Histone H2B type 1-C/E/G from Mus musculus (Mouse).